The chain runs to 324 residues: NADH-ubiquinone oxidoreductase chain 1 (324 aa).

Helical transmembrane passes span 3-23 (LLFM…AVAF), 73-93 (LLFI…WTPF), 106-126 (ILFI…SGWA), 151-171 (ALII…AFAI), 175-195 (FTWF…STLA), 226-246 (LFFL…TIIF), 255-275 (TLTT…FLWV), and 295-315 (FLPL…SLLF).

The protein belongs to the complex I subunit 1 family.

The protein resides in the mitochondrion inner membrane. It catalyses the reaction a ubiquinone + NADH + 5 H(+)(in) = a ubiquinol + NAD(+) + 4 H(+)(out). Functionally, core subunit of the mitochondrial membrane respiratory chain NADH dehydrogenase (Complex I) that is believed to belong to the minimal assembly required for catalysis. Complex I functions in the transfer of electrons from NADH to the respiratory chain. The immediate electron acceptor for the enzyme is believed to be ubiquinone. The sequence is that of NADH-ubiquinone oxidoreductase chain 1 (MT-ND1) from Aquarana catesbeiana (American bullfrog).